A 161-amino-acid polypeptide reads, in one-letter code: Troponin C, slow skeletal and cardiac muscles (161 aa).

M1 is modified (N-acetylmethionine). 4 EF-hand domains span residues 16–51 (QKNEFKAAFDIFVLGAEDGCISTKELGKVMRMLGQN), 52–87 (PTPEELQEMIDEVDEDGSGTVDFDEFLVMMVRCMKD), 92–127 (KTEEELSDLFRMFDKNADGYIDLEELKIMLQATGET), and 128–161 (ITEDDIEELMKDGDKNNDGRIDYDEFLEFMKGVE). Ca(2+) contacts are provided by D65, D67, S69, T71, E76, D105, N107, D109, Y111, E116, D141, N143, D145, R147, and E152.

This sequence belongs to the troponin C family.

Its function is as follows. Troponin is the central regulatory protein of striated muscle contraction. Tn consists of three components: Tn-I which is the inhibitor of actomyosin ATPase, Tn-T which contains the binding site for tropomyosin and Tn-C. The binding of calcium to Tn-C abolishes the inhibitory action of Tn on actin filaments. The polypeptide is Troponin C, slow skeletal and cardiac muscles (TNNC1) (Gallus gallus (Chicken)).